Here is a 347-residue protein sequence, read N- to C-terminus: Probable E3 ubiquitin-protein ligase DTX3 (347 aa).

Residues 111 to 157 are disordered; the sequence is GGEHPELHRPGPPPLRAAPLLPPGARGLPPPPPPLPPPLPPRLREDA. Positions 120–151 are enriched in pro residues; the sequence is PGPPPLRAAPLLPPGARGLPPPPPPLPPPLPP. Residues 164-205 form an RING-type zinc finger; it reads CPICLGEIQNAKTLEKCRHSFCEGCITRALQVKKACPMCGRF.

The protein belongs to the Deltex family. As to quaternary structure, homodimer. May form a heterodimer with other members of the Deltex family. Interacts with NOTCH1. As to expression, strongly expressed in testis and brain. Weakly expressed in kidney.

It localises to the cytoplasm. It carries out the reaction S-ubiquitinyl-[E2 ubiquitin-conjugating enzyme]-L-cysteine + [acceptor protein]-L-lysine = [E2 ubiquitin-conjugating enzyme]-L-cysteine + N(6)-ubiquitinyl-[acceptor protein]-L-lysine.. The protein operates within protein modification; protein ubiquitination. In terms of biological role, regulator of Notch signaling, a signaling pathway involved in cell-cell communications that regulates a broad spectrum of cell-fate determinations. Probably acts both as a positive and negative regulator of Notch, depending on the developmental and cell context. Functions as a ubiquitin ligase protein in vitro, suggesting that it may regulate the Notch pathway via some ubiquitin ligase activity. This is Probable E3 ubiquitin-protein ligase DTX3 (Dtx3) from Mus musculus (Mouse).